The chain runs to 252 residues: Imidazole glycerol phosphate synthase subunit HisF (252 aa).

Residues Asp11 and Asp130 contribute to the active site.

The protein belongs to the HisA/HisF family. As to quaternary structure, heterodimer of HisH and HisF.

Its subcellular location is the cytoplasm. The enzyme catalyses 5-[(5-phospho-1-deoxy-D-ribulos-1-ylimino)methylamino]-1-(5-phospho-beta-D-ribosyl)imidazole-4-carboxamide + L-glutamine = D-erythro-1-(imidazol-4-yl)glycerol 3-phosphate + 5-amino-1-(5-phospho-beta-D-ribosyl)imidazole-4-carboxamide + L-glutamate + H(+). It functions in the pathway amino-acid biosynthesis; L-histidine biosynthesis; L-histidine from 5-phospho-alpha-D-ribose 1-diphosphate: step 5/9. Functionally, IGPS catalyzes the conversion of PRFAR and glutamine to IGP, AICAR and glutamate. The HisF subunit catalyzes the cyclization activity that produces IGP and AICAR from PRFAR using the ammonia provided by the HisH subunit. The sequence is that of Imidazole glycerol phosphate synthase subunit HisF from Bacillus cereus (strain G9842).